Here is a 275-residue protein sequence, read N- to C-terminus: DNA-directed RNA polymerase subunit Rpo3 (275 aa).

The protein belongs to the archaeal Rpo3/eukaryotic RPB3 RNA polymerase subunit family. Part of the RNA polymerase complex.

The protein localises to the cytoplasm. The catalysed reaction is RNA(n) + a ribonucleoside 5'-triphosphate = RNA(n+1) + diphosphate. Its function is as follows. DNA-dependent RNA polymerase (RNAP) catalyzes the transcription of DNA into RNA using the four ribonucleoside triphosphates as substrates. The protein is DNA-directed RNA polymerase subunit Rpo3 of Methanopyrus kandleri (strain AV19 / DSM 6324 / JCM 9639 / NBRC 100938).